The following is a 102-amino-acid chain: MAKQKIRIRLKAYDHRVLDQSAEKIVETAKRSGANVSGPIPLPTEKSVYTILRAVHKYKDSREQFEMRTHKRLIDIVNPTPQTVDALMRLDLPSGVDIEIKL.

This sequence belongs to the universal ribosomal protein uS10 family. In terms of assembly, part of the 30S ribosomal subunit.

Its function is as follows. Involved in the binding of tRNA to the ribosomes. This Halalkalibacterium halodurans (strain ATCC BAA-125 / DSM 18197 / FERM 7344 / JCM 9153 / C-125) (Bacillus halodurans) protein is Small ribosomal subunit protein uS10.